We begin with the raw amino-acid sequence, 234 residues long: Protein CIST1 (234 aa).

The first 24 residues, 1 to 24, serve as a signal peptide directing secretion; it reads MACPQLPPLLLLVLVVLLKAGVNY. The Extracellular portion of the chain corresponds to 25 to 180; that stretch reads NTPFTDIVTS…GPRELHRNPS (156 aa). Polar residues predominate over residues 41–121; it reads SPVSSLISSP…THPSSGSPSA (81 aa). Residues 41 to 174 form a disordered region; sequence SPVSSLISSP…PAPGDTGPRE (134 aa). Positions 122–140 are enriched in low complexity; that stretch reads ELTPSSHSTLPSSESLTPH. A compositionally biased stretch (polar residues) spans 141–159; the sequence is WSPTSHSPGTEPLTSTDQT. Residues 181 to 201 form a helical membrane-spanning segment; the sequence is VVVVVCLLVSLLLIGSVVMAV. At 202–234 the chain is on the cytoplasmic side; the sequence is RFCHRNESKFENLDEVSMGSVNDRLSFAHHLQE.

It is found in the membrane. This is Protein CIST1 from Homo sapiens (Human).